An 871-amino-acid chain; its full sequence is Dual O-methyltransferase/FAD-dependent monooxygenase CTB3 (871 aa).

Residues 1-429 (MMQFQRDLEA…GLLTVRSAGQ (429 aa)) form an O-methyltransferase region. D279 provides a ligand contact to S-adenosyl-L-methionine. The active-site Proton acceptor is the H331. The tract at residues 430–871 (TALSGTNTLT…NLVDCSEFVF (442 aa)) is FAD-dependent monooxygenase. FAD-binding residues include E485, R569, D793, and A806.

This sequence in the C-terminal section; belongs to the paxM FAD-dependent monooxygenase family. It in the N-terminal section; belongs to the class I-like SAM-binding methyltransferase superfamily. Cation-independent O-methyltransferase family. COMT subfamily.

It catalyses the reaction nor-toralactone + S-adenosyl-L-methionine = toralactone + S-adenosyl-L-homocysteine + H(+). It carries out the reaction toralactone + NADH + O2 + H(+) = 1-(3,4,5-trihydroxy-7-methoxynaphthalen-2-yl)propan-2-one + CO2 + NAD(+). Its pathway is mycotoxin biosynthesis. Functionally, dual O-methyltransferase/FAD-dependent monooxygenase; part of the gene cluster that mediates the biosynthesis of cercosporin, a light-activated, non-host-selective toxin. The perylenequinone chromophore of cercosporin absorbs light energy to attain an electronically-activated triplet state and produces active oxygen species such as the hydroxyl radical, superoxide, hydrogen peroxide or singlet oxygen upon reaction with oxygen molecules. These reactive oxygen species cause damage to various cellular components including lipids, proteins and nucleic acids. The first step of cercosporin biosynthesis is performed by the polyketide synthase CTB1 which catalyzes the formation of nor-toralactone. The starter unit acyltransferase (SAT) domain of CTB1 initiates polyketide extension by the selective utilization of acetyl-CoA, which is elongated to the heptaketide in the beta-ketoacyl synthase (KS) domain by successive condensations with six malonyl units introduced by the malonyl acyltransferase (MAT) domain. The product template (PT) domain catalyzes C4-C9 and C2-C11 aldol cyclizations and dehydrations to a trihydroxynaphthalene, which is thought to be delivered to the thioesterase (TE) domain for product release. The bifunctional enzyme CTB3 then methylates nor-toralactone to toralactone before conducting an unusual oxidative aromatic ring opening. The O-methyltransferase CTB2 further methylates the nascent OH-6 of the CBT3 product, blocking further oxidation at this site before the reductase CTB6 reduces the 2-oxopropyl ketone at position C7, giving naphthalene. The FAD-dependent monooxygenase CTB5 in concert with the multicopper oxidase CTB12 are responsible for homodimerization of naphthalene with CTB7 installing the dioxepine moiety, finally producing cercosporin. The fasciclin domain-containing protein CTB11 might act with CTB5 and CTB12 whereas the roles of CTB9 and CTB10 have still to be elucidated. The protein is Dual O-methyltransferase/FAD-dependent monooxygenase CTB3 of Cercospora beticola (Sugarbeet leaf spot fungus).